The chain runs to 286 residues: Release factor glutamine methyltransferase (286 aa).

S-adenosyl-L-methionine-binding positions include 121 to 125 (GTGTG), D144, W172, and N188. 188–191 (NPPY) is a binding site for substrate.

This sequence belongs to the protein N5-glutamine methyltransferase family. PrmC subfamily.

The enzyme catalyses L-glutaminyl-[peptide chain release factor] + S-adenosyl-L-methionine = N(5)-methyl-L-glutaminyl-[peptide chain release factor] + S-adenosyl-L-homocysteine + H(+). Its function is as follows. Methylates the class 1 translation termination release factors RF1/PrfA and RF2/PrfB on the glutamine residue of the universally conserved GGQ motif. This is Release factor glutamine methyltransferase from Vibrio cholerae serotype O1 (strain ATCC 39315 / El Tor Inaba N16961).